A 932-amino-acid polypeptide reads, in one-letter code: Protocadherin gamma-A2 (932 aa).

The signal sequence occupies residues 1–28; that stretch reads MAALQKLPHCRKLVLLCFLLATLWEARA. Cadherin domains lie at 29-133, 134-242, 243-347, 348-452, 453-562, and 570-682; these read GQIR…APRF, GVEE…APVF, TQPE…APEF, YMTS…APAF, SRTS…APEI, and DGST…EPSA. The Extracellular segment spans residues 29 to 692; it reads GQIRYSVREE…IPNDSDLTLY (664 aa). N-linked (GlcNAc...) asparagine glycosylation is found at N419 and N545. N685 carries N-linked (GlcNAc...) asparagine glycosylation. A helical membrane pass occupies residues 693 to 713; the sequence is LVVAVAAVSCVFLAFVIVLLA. At 714–932 the chain is on the cytoplasmic side; sequence HRLRRWHKSR…KKKSGKKEKK (219 aa). Disordered regions lie at residues 798 to 841 and 902 to 932; these read LEEE…WPNN and ATLTNAAGKRDGKAPAGGNGNKKKSGKKEKK. A compositionally biased stretch (polar residues) spans 806 to 841; it reads FSQQAPPNTDWRFSQAQRPGTSGSQNGDDTGTWPNN. Over residues 922-932 the composition is skewed to basic residues; that stretch reads NKKKSGKKEKK.

It is found in the cell membrane. In terms of biological role, potential calcium-dependent cell-adhesion protein. May be involved in the establishment and maintenance of specific neuronal connections in the brain. The protein is Protocadherin gamma-A2 (PCDHGA2) of Homo sapiens (Human).